The sequence spans 1169 residues: Flocculation protein FLO10 (1169 aa).

The first 24 residues, 1–24, serve as a signal peptide directing secretion; that stretch reads MPVAARYIFLTGLFLLSVANVALG. The PA14 domain occupies 111 to 271; it reads PVKRGVKLCS…GTEVNDDFEG (161 aa). Residues Asn122, Asn157, and Asn279 are each glycosylated (N-linked (GlcNAc...) asparagine). 10 repeat units span residues 303–326, 330–356, 357–383, 384–419, 420–446, 447–482, 483–509, 510–545, 546–572, and 573–608. Residues 303–572 form a 6 X 27 AA approximate repeats, Ser/Thr-rich region; that stretch reads SSWSSSEVCT…TSYVTPYVSS (270 aa). Residues 384 to 608 are 4 X 36 AA approximate repeats, Ser/Thr-rich; sequence STAAANYTSS…TSTSTPYATS (225 aa). Asn389 is a glycosylation site (N-linked (GlcNAc...) asparagine). An N-linked (GlcNAc...) asparagine glycan is attached at Asn452. N-linked (GlcNAc...) asparagine glycosylation is present at Asn515. Asn578, Asn656, and Asn686 each carry an N-linked (GlcNAc...) asparagine glycan. Positions 798–819 are enriched in low complexity; that stretch reads TKVSSSESSESHRTSPTTSSES. 3 disordered regions span residues 798–837, 856–920, and 1070–1107; these read TKVS…SSFS, TPSS…SRDR, and RNNN…EAVS. Positions 856–884 are enriched in polar residues; sequence TPSSPISTVAPRSTGLNSQTESTNSSKET. An N-linked (GlcNAc...) asparagine glycan is attached at Asn879. The segment covering 886–902 has biased composition (low complexity); sequence SSENSASVMPSSSATSP. Polar residues predominate over residues 906-916; it reads KVTSDETSSGF. The span at 1077–1107 shows a compositional bias: low complexity; sequence TSGTTSIETHTTTTSNASENSDNVSASEAVS. N-linked (GlcNAc...) asparagine glycans are attached at residues Asn1092 and Asn1099. Residue Gly1146 is the site of GPI-anchor amidated glycine attachment. Residues 1147–1169 constitute a propeptide, removed in mature form; it reads IANHLLTNSGISIFIASLLLAIV.

Belongs to the flocculin family. In terms of processing, extensively O-glycosylated. Post-translationally, the GPI-anchor is attached to the protein in the endoplasmic reticulum and serves to target the protein to the cell surface. There, the glucosamine-inositol phospholipid moiety is cleaved off and the GPI-modified mannoprotein is covalently attached via its lipidless GPI glycan remnant to the 1,6-beta-glucan of the outer cell wall layer.

It is found in the secreted. The protein resides in the cell wall. Its subcellular location is the membrane. Its function is as follows. Cell wall protein that participates directly in adhesive cell-cell interactions during yeast flocculation, a reversible, asexual and Ca(2+)-dependent process in which cells adhere to form aggregates (flocs) consisting of thousands of cells. The lectin-like protein sticks out of the cell wall of flocculent cells and selectively binds mannose residues in the cell walls of adjacent cells. Activity is inhibited by mannose, glucose, maltose and sucrose. Also involved in cell-substrate adhesion, haploid invasive growth and diploid pseudohyphae formation. This Saccharomyces cerevisiae (strain ATCC 204508 / S288c) (Baker's yeast) protein is Flocculation protein FLO10 (FLO10).